Reading from the N-terminus, the 499-residue chain is Lysine--tRNA ligase (499 aa).

Glu409 and Glu416 together coordinate Mg(2+).

The protein belongs to the class-II aminoacyl-tRNA synthetase family. In terms of assembly, homodimer. The cofactor is Mg(2+).

The protein localises to the cytoplasm. It carries out the reaction tRNA(Lys) + L-lysine + ATP = L-lysyl-tRNA(Lys) + AMP + diphosphate. The protein is Lysine--tRNA ligase of Pseudomonas fluorescens (strain Pf0-1).